The chain runs to 319 residues: Cytochrome c biogenesis protein CcsA (319 aa).

Transmembrane regions (helical) follow at residues 9–29 (ILTH…LITL), 44–64 (GMIV…ASSG), 68–88 (LSNL…LHTI), 143–163 (MLLS…ILII), 223–243 (VISL…VWAN), 257–271 (TWAF…IYLH), and 286–306 (VASI…LLGI).

This sequence belongs to the CcmF/CycK/Ccl1/NrfE/CcsA family. May interact with Ccs1.

Its subcellular location is the plastid. The protein localises to the chloroplast thylakoid membrane. Required during biogenesis of c-type cytochromes (cytochrome c6 and cytochrome f) at the step of heme attachment. This is Cytochrome c biogenesis protein CcsA from Agrostis stolonifera (Creeping bentgrass).